We begin with the raw amino-acid sequence, 285 residues long: MPHRCAAQVVAGYRSTVSLVLVEHPRPEIAQITLNRPERMNSMAFDVMVPLKEALAQVSYDNSVRVVVLTGAGRGFSPGADHKSAGVVPHVENLTRPTYALRSMELLDDVILMLRRLHQPVIAAVNGPAIGGGLCLALAADIRVASSSAYFRAAGINNGLTASELGLSYLLPRAIGSSRAFEIMLTGRDVSAEEAERIGLVSRQVPDEQLLDACYAIAARMAGFSRPGIELTKRTLWSGLDAASLEAHMQAEGLGQLFVRLLTANFEEAVAARAEQRAPVFTDDT.

It belongs to the enoyl-CoA hydratase/isomerase family.

The enzyme catalyses a (3S)-3-hydroxyacyl-CoA = a (2E)-enoyl-CoA + H2O. The catalysed reaction is a 4-saturated-(3S)-3-hydroxyacyl-CoA = a (3E)-enoyl-CoA + H2O. Its function is as follows. Could possibly oxidize fatty acids using specific components. In Mycobacterium tuberculosis (strain CDC 1551 / Oshkosh), this protein is Probable enoyl-CoA hydratase echA12 (echA12).